Reading from the N-terminus, the 339-residue chain is Biotin synthase (339 aa).

The Radical SAM core domain maps to 55 to 282; the sequence is NAVQLSTLLS…KAVVRLSAGR (228 aa). Residues Cys70, Cys74, and Cys77 each coordinate [4Fe-4S] cluster. Positions 114, 145, 205, and 277 each coordinate [2Fe-2S] cluster.

Belongs to the radical SAM superfamily. Biotin synthase family. In terms of assembly, homodimer. It depends on [4Fe-4S] cluster as a cofactor. Requires [2Fe-2S] cluster as cofactor.

The catalysed reaction is (4R,5S)-dethiobiotin + (sulfur carrier)-SH + 2 reduced [2Fe-2S]-[ferredoxin] + 2 S-adenosyl-L-methionine = (sulfur carrier)-H + biotin + 2 5'-deoxyadenosine + 2 L-methionine + 2 oxidized [2Fe-2S]-[ferredoxin]. It functions in the pathway cofactor biosynthesis; biotin biosynthesis; biotin from 7,8-diaminononanoate: step 2/2. In terms of biological role, catalyzes the conversion of dethiobiotin (DTB) to biotin by the insertion of a sulfur atom into dethiobiotin via a radical-based mechanism. The chain is Biotin synthase from Burkholderia cenocepacia (strain ATCC BAA-245 / DSM 16553 / LMG 16656 / NCTC 13227 / J2315 / CF5610) (Burkholderia cepacia (strain J2315)).